Consider the following 205-residue polypeptide: Holliday junction branch migration complex subunit RuvA (205 aa).

The interval 1–64 (MIGKLKGVVD…EDMIRLYGFR (64 aa)) is domain I. Residues 65–143 (SDAEREWFRL…AFAPVDPALV (79 aa)) form a domain II region. The interval 144–152 (ALAGAVEEG) is flexible linker. Residues 153–205 (AAPQPVADAVSALVNLGYPQVQAAAAIAAALKGAGEGAEAKVLIRLGLRELAR) form a domain III region.

Belongs to the RuvA family. Homotetramer. Forms an RuvA(8)-RuvB(12)-Holliday junction (HJ) complex. HJ DNA is sandwiched between 2 RuvA tetramers; dsDNA enters through RuvA and exits via RuvB. An RuvB hexamer assembles on each DNA strand where it exits the tetramer. Each RuvB hexamer is contacted by two RuvA subunits (via domain III) on 2 adjacent RuvB subunits; this complex drives branch migration. In the full resolvosome a probable DNA-RuvA(4)-RuvB(12)-RuvC(2) complex forms which resolves the HJ.

Its subcellular location is the cytoplasm. Functionally, the RuvA-RuvB-RuvC complex processes Holliday junction (HJ) DNA during genetic recombination and DNA repair, while the RuvA-RuvB complex plays an important role in the rescue of blocked DNA replication forks via replication fork reversal (RFR). RuvA specifically binds to HJ cruciform DNA, conferring on it an open structure. The RuvB hexamer acts as an ATP-dependent pump, pulling dsDNA into and through the RuvAB complex. HJ branch migration allows RuvC to scan DNA until it finds its consensus sequence, where it cleaves and resolves the cruciform DNA. This is Holliday junction branch migration complex subunit RuvA from Methylobacterium radiotolerans (strain ATCC 27329 / DSM 1819 / JCM 2831 / NBRC 15690 / NCIMB 10815 / 0-1).